Reading from the N-terminus, the 292-residue chain is MVIVTKGAYVHEFPRTAEWNAFAQILSREHGYIVSDTALEGAAKPYYVVNSSGFYGPPGLDGLISTLDRELQYYSKLLYEIKGLGVMSDENVFGTQYDGNLTARVSRLERRLNPMSNIGSSSRPWSEHKSAVKKADLERYVYANFADWSNHLGPAGKSTREVVKYLMYRMGYYSDTSGIGHDLNYKHFRDHLDIYNLTCSPPFLVSSAVVDGHYARDKFVSFQGVCGFNPMFPDVNGLKSSWSLGRQLDDIRSQKKEVSGTNQEPNYYYDGDTLKPIGSGASVVGERRPGWR.

In terms of biological role, may be involved in transmission by vector nematode species. This chain is 32 kDa protein, found in Bidens pilosa (Hairy beggarticks).